A 601-amino-acid chain; its full sequence is NAD(+)--arginine ADP-ribosyltransferase Chelt (601 aa).

An N-terminal signal peptide occupies residues 1 to 18 (MKTIISLIFIMFPLFVSA). NAD(+) contacts are provided by residues 26 to 43 (ADSR…LYPR) and glutamate 130. Glutamate 130 is a catalytic residue. An intrachain disulfide couples cysteine 205 to cysteine 220.

It belongs to the enterotoxin A family.

It localises to the secreted. The enzyme catalyses L-arginyl-[protein] + NAD(+) = N(omega)-(ADP-D-ribosyl)-L-arginyl-[protein] + nicotinamide + H(+). In terms of biological role, a probable mono(ADP-ribosyl)transferase, it may ADP-ribosylate Arg in target protein(s). Upon expression in yeast cells causes cell death. The polypeptide is NAD(+)--arginine ADP-ribosyltransferase Chelt (Vibrio cholerae).